The sequence spans 1099 residues: Protein DDB_G0287365 (1099 aa).

The N-terminal stretch at methionine 1 to glycine 24 is a signal peptide. Positions lysine 47–serine 174 constitute a G8 domain. N-linked (GlcNAc...) asparagine glycosylation is found at asparagine 62, asparagine 137, asparagine 664, asparagine 764, and asparagine 858.

It belongs to the CEMIP family.

This is Protein DDB_G0287365 from Dictyostelium discoideum (Social amoeba).